The primary structure comprises 388 residues: GDP-4-keto-6-deoxy-D-mannose 3-dehydratase (388 aa).

26-29 (KMFT) lines the GDP-4-dehydro-alpha-D-rhamnose pocket. Residues 49 to 69 (YAVMVSSGSTANLLMIAALFF) form a helical membrane-spanning segment. Pyridoxal 5'-phosphate-binding positions include 56 to 57 (GS), Trp-88, Glu-162, and Ser-183. The active-site Proton donor/acceptor is His-188. His-215 is a binding site for L-glutamate. Residue Arg-219 coordinates GDP-4-dehydro-alpha-D-rhamnose. Pyridoxal 5'-phosphate is bound at residue Asn-248. Residue Arg-250 participates in L-glutamate binding. Glu-329 serves as a coordination point for GDP-4-dehydro-alpha-D-rhamnose.

Belongs to the DegT/DnrJ/EryC1 family. In terms of assembly, homodimer. Pyridoxal 5'-phosphate serves as cofactor.

The protein resides in the cell membrane. It carries out the reaction GDP-4-dehydro-alpha-D-rhamnose + L-glutamate = GDP-4-dehydro-3,6-dideoxy-alpha-D-mannose + 2-oxoglutarate + NH4(+). It participates in nucleotide-sugar metabolism; GDP-L-colitose biosynthesis. Involved in the biosynthesis of L-colitose, a 3,6-dideoxyhexose present in the O-antigen region of lipopolysaccharides (LPS), where it serves as an antigenic determinant and is vital for bacterial defense and survival. Catalyzes the removal of the C3'-hydroxyl group from GDP-4-keto-6-deoxy-D-mannose via a combined transamination-deoxygenation reaction. The catalysis is initiated by a transamination step in which pyridoxal 5'-phosphate (PLP) is converted to pyridoxamine 5'-phosphate (PMP) in the presence of L-glutamate. This coenzyme then forms a Schiff base with GDP-4-keto-6-deoxy-D-mannose and the resulting adduct undergoes a PMP-mediated beta-dehydration reaction to give a sugar enamine intermediate, which after tautomerization and hydrolysis to release ammonia yields GDP-4-keto-3,6-dideoxy-D-mannose as a product. In vitro, is able to catalyze the formation of GDP-4-keto-3,6-dideoxymannose using GDP-perosamine rather than GDP-4-keto-6-deoxymannose as a substrate, with no need of glutamate. The polypeptide is GDP-4-keto-6-deoxy-D-mannose 3-dehydratase (Escherichia coli O55:H7 (strain CB9615 / EPEC)).